The sequence spans 569 residues: Falcipain-1 (569 aa).

Topologically, residues 1–35 are cytoplasmic; that stretch reads MVAIKEMKEFAFARPSLVETLNKKKKFLKKKEKRT. Residues 1–332 constitute a propeptide, activation peptide; the sequence is MVAIKEMKEF…KRNEKDIFSK (332 aa). The helical; Signal-anchor for type II membrane protein transmembrane segment at 36 to 56 threads the bilayer; that stretch reads FVLSIYAFITFIIFCIGILYF. Topologically, residues 57 to 569 are lumenal; that stretch reads TNKSSAHNNN…IGEEVFYPIL (513 aa). Asn58, Asn98, Asn121, and Asn127 each carry an N-linked (GlcNAc...) asparagine glycan. A disordered region spans residues 97-118; that stretch reads LNESSNEEDEEKYTLNSETYNN. Cystine bridges form between Cys354–Cys395, Cys388–Cys428, and Cys413–Cys433. The active site involves Cys357. Residues Asn479 and Asn487 are each glycosylated (N-linked (GlcNAc...) asparagine). A disulfide bridge links Cys482 with Cys558. Residues His488 and Asn533 contribute to the active site.

It belongs to the peptidase C1 family. Contains disulfide bonds.

The protein localises to the membrane. The protein resides in the cytoplasmic granule. In terms of biological role, cysteine protease. In the mosquito midgut, required for parasite development. The chain is Falcipain-1 from Plasmodium falciparum (isolate 3D7).